We begin with the raw amino-acid sequence, 124 residues long: Small ribosomal subunit protein bS6 (124 aa).

The tract at residues 97-124 is disordered; it reads EQGPSAMMRRGDRDRSNRSDRRRDRDAA. Residues 105–124 are compositionally biased toward basic and acidic residues; sequence RRGDRDRSNRSDRRRDRDAA.

This sequence belongs to the bacterial ribosomal protein bS6 family.

Functionally, binds together with bS18 to 16S ribosomal RNA. This chain is Small ribosomal subunit protein bS6, found in Zymomonas mobilis subsp. mobilis (strain ATCC 31821 / ZM4 / CP4).